A 292-amino-acid polypeptide reads, in one-letter code: Glutathione S-transferase L2, chloroplastic (292 aa).

The transit peptide at 1–56 directs the protein to the chloroplast; it reads MSVGLKVSAFLHPTLALSSRDVSLSSSSSSLYLDRKILRPGSGRRWCKSRRTEPIL. The GST N-terminal domain maps to 79-160; sequence GSTRLYISYT…YIDTNFEGPS (82 aa). Glutathione-binding positions include 89–90, 117–118, 131–132, and 144–145; these read CP, NR, KV, and ES. The GST C-terminal domain occupies 130–286; that stretch reads NKVPALEHNN…ELVERYKRRV (157 aa).

Belongs to the GST superfamily. Lambda family.

The protein localises to the plastid. It localises to the chloroplast. It carries out the reaction RX + glutathione = an S-substituted glutathione + a halide anion + H(+). Its function is as follows. Catalyzes the glutathione-dependent reduction of S-glutathionylquercetin to quercetin. In vitro, possesses glutathione-dependent thiol transferase activity toward 2-hydroxyethyl disulfide (HED). The polypeptide is Glutathione S-transferase L2, chloroplastic (GSTL2) (Arabidopsis thaliana (Mouse-ear cress)).